A 436-amino-acid chain; its full sequence is MKGVRKPYDNSYTLSFLLVFFVLILFCPAFSINTLSSTESLRISSNRTLVSPGNNFELGFFRTNSSSRWYLGIWYKKLLDRTYVWVANRDNPLSNAIGTLKISGNNLVLLGHTNKSVWSTNLTRGNERLPVVAELLSNGNFVMRDSSNNDASEYLWQSFDYPTDTLLPEMKLGYDLKTGLNRFLTSWRSSDDPSSGDFSYKLETRSLPEFYLWHGIFPMHRSGPWNGVRFSGIPEDQKLSYMVYNFTENSEEVAYTFRMTNNSIYSRLTLSSEGYFQRLTWNPSIGIWNRFWSSPVDPQCDTYIMCGPYAYCGVNTSPVCNCIQGFNPRNIQQWDQRVWAGGCIRRTRLSCSGDGFTRMKNMKLPETTMAIVDRSIGVKECEKRCLSDCNCTAFANADIRNGGTGCVIWTGRLDDMRNYVAHGQDLYVRLAVADLV.

An N-terminal signal peptide occupies residues 1 to 31; the sequence is MKGVRKPYDNSYTLSFLLVFFVLILFCPAFS. The region spanning 34–156 is the Bulb-type lectin domain; that stretch reads TLSSTESLRI…SNNDASEYLW (123 aa). Residues Asn46, Asn64, Asn114, Asn121, Asn245, Asn261, and Asn390 are each glycosylated (N-linked (GlcNAc...) asparagine). The PAN domain maps to 351–431; sequence CSGDGFTRMK…HGQDLYVRLA (81 aa). 2 cysteine pairs are disulfide-bonded: Cys381–Cys406 and Cys389–Cys391.

In terms of tissue distribution, stigma.

Functionally, involved in sporophytic self-incompatibility system (the inability of flowering plants to achieve self-fertilization). The protein is S-locus-specific glycoprotein S6 (SLSG) of Brassica oleracea (Wild cabbage).